We begin with the raw amino-acid sequence, 367 residues long: Pepsin A (367 aa).

The propeptide at 1–42 (SIHRVPLKKGKSLRKQLKDHGLLEDFLKKHPYNPASKYHPVL) is activation peptide. A Peptidase A1 domain is found at 59 to 364 (YYGTISIGTP…DRANNKVGLS (306 aa)). Asp-77 is a catalytic residue. A disulfide bridge links Cys-90 with Cys-95. The N-linked (GlcNAc...) asparagine glycan is linked to Asn-113. Cys-251 and Cys-255 form a disulfide bridge. Asp-260 is an active-site residue. A disulfide bond links Cys-290 and Cys-323.

This sequence belongs to the peptidase A1 family.

The catalysed reaction is Preferential cleavage: hydrophobic, preferably aromatic, residues in P1 and P1' positions. Cleaves 1-Phe-|-Val-2, 4-Gln-|-His-5, 13-Glu-|-Ala-14, 14-Ala-|-Leu-15, 15-Leu-|-Tyr-16, 16-Tyr-|-Leu-17, 23-Gly-|-Phe-24, 24-Phe-|-Phe-25 and 25-Phe-|-Tyr-26 bonds in the B chain of insulin.. In terms of biological role, shows particularly broad specificity; although bonds involving phenylalanine and leucine are preferred, many others are also cleaved to some extent. This is Pepsin A (PGA) from Gallus gallus (Chicken).